The chain runs to 92 residues: Acyl carrier protein (92 aa).

Residues 1–84 form the Carrier domain; sequence MPSTADERQL…QIAAHLAEAV (84 aa). S44 carries the post-translational modification O-(pantetheine 4'-phosphoryl)serine.

It belongs to the acyl carrier protein (ACP) family. 4'-phosphopantetheine is transferred from CoA to a specific serine of apo-ACP by AcpS. This modification is essential for activity because fatty acids are bound in thioester linkage to the sulfhydryl of the prosthetic group.

It localises to the cytoplasm. The protein operates within lipid metabolism; fatty acid biosynthesis. In terms of biological role, carrier of the growing fatty acid chain in fatty acid biosynthesis. In Streptomyces coelicolor (strain ATCC BAA-471 / A3(2) / M145), this protein is Acyl carrier protein.